Consider the following 454-residue polypeptide: Light-independent protochlorophyllide reductase subunit N (454 aa).

[4Fe-4S] cluster is bound by residues Cys22, Cys47, and Cys107.

Belongs to the BchN/ChlN family. As to quaternary structure, protochlorophyllide reductase is composed of three subunits; ChlL, ChlN and ChlB. Forms a heterotetramer of two ChlB and two ChlN subunits. The cofactor is [4Fe-4S] cluster.

Its subcellular location is the plastid. The protein resides in the chloroplast. It catalyses the reaction chlorophyllide a + oxidized 2[4Fe-4S]-[ferredoxin] + 2 ADP + 2 phosphate = protochlorophyllide a + reduced 2[4Fe-4S]-[ferredoxin] + 2 ATP + 2 H2O. It functions in the pathway porphyrin-containing compound metabolism; chlorophyll biosynthesis (light-independent). In terms of biological role, component of the dark-operative protochlorophyllide reductase (DPOR) that uses Mg-ATP and reduced ferredoxin to reduce ring D of protochlorophyllide (Pchlide) to form chlorophyllide a (Chlide). This reaction is light-independent. The NB-protein (ChlN-ChlB) is the catalytic component of the complex. The chain is Light-independent protochlorophyllide reductase subunit N from Cycas taitungensis (Prince sago).